The primary structure comprises 294 residues: MMRIALFLLTNLAVMVVFGLVLSLTGIQSSSMTGLLIMALLFGFGGSIVSLMMSKWMALKSVGGEVIEQPRNETERWLMNTVAQQAQQVGIAMPQVAIYHAPDINAFATGARRDASLVAVSTGLLQNMSRDEAEAVIAHEISHIANGDMVTMTLIQGVVNTFVIFISRVIAQIAAGFLGGNREDEGESSNGNPLIYFAVATVLELVFGILASIITMWFSRYREFHADAGSARLVGREKMIAALQRLKTSYEPQEASSMMAFCINGKAKSMSELFMTHPPLDKRIEALRSGEYLK.

2 consecutive transmembrane segments (helical) span residues 4-24 (IALF…VLSL) and 34-52 (GLLI…VSLM). Residue His139 participates in Zn(2+) binding. Residue Glu140 is part of the active site. His143 is a Zn(2+) binding site. Transmembrane regions (helical) follow at residues 158–178 (VVNT…AGFL) and 194–214 (LIYF…ASII). Glu223 contributes to the Zn(2+) binding site.

The protein belongs to the peptidase M48B family. Zn(2+) is required as a cofactor.

The protein localises to the cell inner membrane. This is Protease HtpX from Klebsiella pneumoniae subsp. pneumoniae (strain ATCC 700721 / MGH 78578).